A 458-amino-acid polypeptide reads, in one-letter code: Argininosuccinate lyase (458 aa).

It belongs to the lyase 1 family. Argininosuccinate lyase subfamily.

The protein resides in the cytoplasm. It catalyses the reaction 2-(N(omega)-L-arginino)succinate = fumarate + L-arginine. It functions in the pathway amino-acid biosynthesis; L-arginine biosynthesis; L-arginine from L-ornithine and carbamoyl phosphate: step 3/3. The chain is Argininosuccinate lyase from Salmonella paratyphi A (strain ATCC 9150 / SARB42).